The chain runs to 266 residues: tRNA (guanine-N(7)-)-methyltransferase (266 aa).

The interval 1-32 (MSDHGRMHIPESGLATPAAAHSDDPPHPHFNR) is disordered. Glu-96, Glu-121, Asp-148, and Asp-171 together coordinate S-adenosyl-L-methionine. Asp-171 is an active-site residue. Residues Lys-175 and Asp-207 each contribute to the substrate site.

It belongs to the class I-like SAM-binding methyltransferase superfamily. TrmB family.

The enzyme catalyses guanosine(46) in tRNA + S-adenosyl-L-methionine = N(7)-methylguanosine(46) in tRNA + S-adenosyl-L-homocysteine. It functions in the pathway tRNA modification; N(7)-methylguanine-tRNA biosynthesis. Catalyzes the formation of N(7)-methylguanine at position 46 (m7G46) in tRNA. This chain is tRNA (guanine-N(7)-)-methyltransferase, found in Mycolicibacterium vanbaalenii (strain DSM 7251 / JCM 13017 / BCRC 16820 / KCTC 9966 / NRRL B-24157 / PYR-1) (Mycobacterium vanbaalenii).